The sequence spans 601 residues: Potassium channel KAT2 (601 aa).

Residues 1–42 (METISNIFHNDPLPPLGARANQSIKLRKFIISPYDSRYRTWE) are Cytoplasmic-facing. The helical transmembrane segment at 43 to 63 (TFLLVLVVYSAWICPFELAYL) threads the bilayer. At 64 to 71 (RNLSWKVS) the chain is on the extracellular side. A helical membrane pass occupies residues 72-92 (LVDNIIDSFFAIDIILTFFLA). At 93–112 (YLDQKSYLLVDDPKRIVARY) the chain is on the cytoplasmic side. A helical membrane pass occupies residues 113 to 133 (FSSWFLFDVCSTIPYQLLGQI). Residues 134–144 (FKKHENGLAYR) lie on the Extracellular side of the membrane. The chain crosses the membrane as a helical; Voltage-sensor span at residues 145 to 165 (LLSMLRLWRLRRLSELFARLE). Residues 166-179 (KDIRLNYYWIRCTK) are Cytoplasmic-facing. The helical transmembrane segment at 180 to 200 (LISVTLFAVHCSGCFNYLIAD) threads the bilayer. Topologically, residues 201 to 227 (RYPNPARTWIGAAIPNYRSQNLWVRYV) are extracellular. Positions 228–247 (TAIYWSITTLTTTGYGDLHA) form an intramembrane region, pore-forming. Residues 248–251 (ENQR) lie on the Extracellular side of the membrane. A helical transmembrane segment spans residues 252–272 (EMLFSICYMLFNLGLTAYLIG). Topologically, residues 273–601 (NMTNLVVQGS…DGDHLFFMEI (329 aa)) are cytoplasmic. A nucleoside 3',5'-cyclic phosphate is bound at residue 356–475 (LFHGVSFTCM…RVILNNLSQK (120 aa)). Residues 530–601 (RVTIHMYSQR…DGDHLFFMEI (72 aa)) enclose the KHA domain.

Belongs to the potassium channel family. Plant (TC 1.A.1.4) subfamily.

It is found in the membrane. Probable inward-rectifying potassium channel. Assuming opened or closed conformations in response to the voltage difference across the membrane, the channel is activated by hyperpolarization. The polypeptide is Potassium channel KAT2 (Oryza sativa subsp. japonica (Rice)).